Here is a 649-residue protein sequence, read N- to C-terminus: Beta-galactosidase-1-like protein 3 (649 aa).

Glutamate 203 (proton donor) is an active-site residue. Glutamate 277 serves as the catalytic Nucleophile.

This sequence belongs to the glycosyl hydrolase 35 family.

The chain is Beta-galactosidase-1-like protein 3 (Glb1l3) from Mus musculus (Mouse).